The sequence spans 314 residues: Protoheme IX farnesyltransferase (314 aa).

Transmembrane regions (helical) follow at residues 31-51 (VMSL…GHFH), 52-72 (PVLA…SGAL), 119-139 (ILVN…YVVI), 152-172 (IVIG…AVTG), 179-199 (LLLF…LALF), 225-245 (ILLY…LGYF), 247-267 (AVYG…AINV), and 284-304 (FAFS…EVVF).

This sequence belongs to the UbiA prenyltransferase family. Protoheme IX farnesyltransferase subfamily.

It is found in the cell inner membrane. The catalysed reaction is heme b + (2E,6E)-farnesyl diphosphate + H2O = Fe(II)-heme o + diphosphate. The protein operates within porphyrin-containing compound metabolism; heme O biosynthesis; heme O from protoheme: step 1/1. In terms of biological role, converts heme B (protoheme IX) to heme O by substitution of the vinyl group on carbon 2 of heme B porphyrin ring with a hydroxyethyl farnesyl side group. The chain is Protoheme IX farnesyltransferase from Bradyrhizobium diazoefficiens (strain JCM 10833 / BCRC 13528 / IAM 13628 / NBRC 14792 / USDA 110).